We begin with the raw amino-acid sequence, 237 residues long: Large ribosomal subunit protein uL1 (237 aa).

This sequence belongs to the universal ribosomal protein uL1 family. As to quaternary structure, part of the 50S ribosomal subunit.

Its function is as follows. Binds directly to 23S rRNA. The L1 stalk is quite mobile in the ribosome, and is involved in E site tRNA release. Protein L1 is also a translational repressor protein, it controls the translation of the L11 operon by binding to its mRNA. This Rickettsia typhi (strain ATCC VR-144 / Wilmington) protein is Large ribosomal subunit protein uL1.